A 482-amino-acid polypeptide reads, in one-letter code: FAD-linked oxidoreductase alt4 (482 aa).

One can recognise an FAD-binding PCMH-type domain in the interval 53 to 211; sequence ERPTYLAIVD…LEATFQVYPQ (159 aa).

Belongs to the oxygen-dependent FAD-linked oxidoreductase family. Requires FAD as cofactor.

It participates in secondary metabolite biosynthesis. Functionally, FAD-linked oxidoreductase; part of the gene cluster that mediates the biosynthesis of alternapyrone derivatives. Alternapyrone is a decaketide with octa-methylation from methionine on every C2 unit except the third unit. All the domains in the polyketide synthase alt5 are apparently involved in alternapyrone synthesis, that is, the 8 CMeT, 7 KR, 7 DH, and 4 ER reactions in the 9 KS-mediated condensation steps required for alternapyrone synthesis. the alternapyrone produced by alt5 might be intensively modified by cytochrome P450 monooxygenases alt1, alt2 and alt3 and FAD-dependent oxidoreductase alt4 present in the alt gene cluster. In Alternaria solani, this protein is FAD-linked oxidoreductase alt4.